Reading from the N-terminus, the 250-residue chain is Alpha/beta hydrolase nvfD (250 aa).

Residues Asp-198 and His-226 each act as charge relay system in the active site.

It belongs to the AB hydrolase superfamily.

Its pathway is secondary metabolite biosynthesis; terpenoid biosynthesis. Functionally, alpha/beta hydrolase; part of the gene cluster that mediates the biosynthesis of novofumigatonin, a heavily oxygenated meroterpenoid containing a unique orthoester moiety. The first step of the pathway is the synthesis of 3,5-dimethylorsellinic acid (DMOA) by the polyketide synthase nvfA via condensation of one acetyl-CoA starter unit with 3 malonyl-CoA units and 2 methylations. DMOA is then converted to farnesyl-DMOA by the farnesyltransferase nvfB. Epoxydation by FAD-dependent monooxygenase nvfK, followed by a protonation-initiated cyclization catalyzed by the terpene cyclase nvfL leads to the production of asnavolin H. The short chain dehydrogenase nvfC then as a 3-OH dehydrogenase of asnovolin H to yield chemesin D. There are two branches to synthesize asnovolin A from chemesin D. In one branch, chemesin D undergoes Baeyer-Villiger oxidation by nvfH, methylation by nvfJ, and enoyl reduction by the nvfM D enoylreductase that reduces the double bond between C-5'and C-6', to form respectively asnovolin I, asnovolin K, and asnovolin A. In the other branch, the methylation precedes the Baeyer-Villiger oxidation and the enoyl reduction to yield asnovolin A via the asnovolin J intermediate. Asnovolin A is further converted to fumigatonoid A by the Fe(II)/2-oxoglutarate-dependent dioxygenase nvfI that catalyzes an endoperoxidation reaction. The alpha/beta hydrolase nvfD then acts as an epimerase that converts fumigatonoid A to its C-5' epimer, which then undergoes spontaneous or nvfD-catalyzed lactonization. The following step utilizes the ketoreductase nvfG to produce fumigatonoid B. The dioxygenase nvfE further converts fumigatonoid B into fumigatonoid C. Finally the Fe(II)/2-oxoglutarate-dependent dioxygenase nvfF catalyzes two rounds of oxidation to transform fumigatonoid C into the end product, novofumigatonin A. The protein is Alpha/beta hydrolase nvfD of Aspergillus novofumigatus (strain IBT 16806).